The sequence spans 162 residues: Transmembrane protein 92 (162 aa).

Residues 1–22 (MLDTWVWGTLTLTFGLLSSLQG) form the signal peptide. At 23–63 (VSFNETANTCDILNCPKGFTCCVKECCPERKVWDPANDRFR) the chain is on the extracellular side. A helical membrane pass occupies residues 64–84 (FLVILACIIFPILFICALVSL). Residues 85 to 162 (FCPNCTELQH…QMRGRAYATL (78 aa)) lie on the Cytoplasmic side of the membrane. A disordered region spans residues 134–162 (TPPTEPPPPYSLRPEGPAGQMRGRAYATL).

It localises to the membrane. This chain is Transmembrane protein 92 (Tmem92), found in Mus musculus (Mouse).